Reading from the N-terminus, the 439-residue chain is Ribosomal protein uS12 methylthiotransferase RimO (439 aa).

Residues 5–117 (KKLHLISLGC…IDELIASKQS (113 aa)) enclose the MTTase N-terminal domain. [4Fe-4S] cluster contacts are provided by Cys-14, Cys-48, Cys-80, Cys-149, Cys-153, and Cys-156. The region spanning 135–363 (TGSNYHAYIK…GEIAERSTLR (229 aa)) is the Radical SAM core domain. One can recognise a TRAM domain in the interval 366–437 (EKMVGKTVEL…GMQLLATLIK (72 aa)).

This sequence belongs to the methylthiotransferase family. RimO subfamily. [4Fe-4S] cluster is required as a cofactor.

The protein localises to the cytoplasm. It catalyses the reaction L-aspartate(89)-[ribosomal protein uS12]-hydrogen + (sulfur carrier)-SH + AH2 + 2 S-adenosyl-L-methionine = 3-methylsulfanyl-L-aspartate(89)-[ribosomal protein uS12]-hydrogen + (sulfur carrier)-H + 5'-deoxyadenosine + L-methionine + A + S-adenosyl-L-homocysteine + 2 H(+). Functionally, catalyzes the methylthiolation of an aspartic acid residue of ribosomal protein uS12. This Sulfurovum sp. (strain NBC37-1) protein is Ribosomal protein uS12 methylthiotransferase RimO.